Reading from the N-terminus, the 264-residue chain is Pimeloyl-[acyl-carrier protein] methyl ester esterase (264 aa).

Positions 23 to 244 constitute an AB hydrolase-1 domain; that stretch reads LVMLHGWGVN…MLAKASHAPF (222 aa). Residues Trp29, 87–88, and 150–154 contribute to the substrate site; these read SL and FLAIQ. The Nucleophile role is filled by Ser87. Active-site residues include Asp214 and His241. His241 provides a ligand contact to substrate.

It belongs to the AB hydrolase superfamily. Carboxylesterase BioH family. In terms of assembly, monomer.

It is found in the cytoplasm. It catalyses the reaction 6-carboxyhexanoyl-[ACP] methyl ester + H2O = 6-carboxyhexanoyl-[ACP] + methanol + H(+). The protein operates within cofactor biosynthesis; biotin biosynthesis. In terms of biological role, the physiological role of BioH is to remove the methyl group introduced by BioC when the pimeloyl moiety is complete. It allows to synthesize pimeloyl-ACP via the fatty acid synthetic pathway through the hydrolysis of the ester bonds of pimeloyl-ACP esters. This is Pimeloyl-[acyl-carrier protein] methyl ester esterase from Shewanella sp. (strain MR-7).